Consider the following 143-residue polypeptide: Large ribosomal subunit protein uL15 (143 aa).

Positions 20–52 are disordered; sequence GRGIGSGKGKTAGRGHKGQHSRAGGYHKVGFEG. The span at 30 to 39 shows a compositional bias: basic residues; sequence TAGRGHKGQH.

The protein belongs to the universal ribosomal protein uL15 family. In terms of assembly, part of the 50S ribosomal subunit.

In terms of biological role, binds to the 23S rRNA. In Coxiella burnetii (strain CbuG_Q212) (Coxiella burnetii (strain Q212)), this protein is Large ribosomal subunit protein uL15.